The chain runs to 66 residues: Cold shock protein CspD (66 aa).

Positions 4-63 (GKVKWFNNEKGFGFIEVEGGDDVFVHFTAIEGDGYKSLEEGQEVSFEIVEGNRGPQASNV) constitute a CSD domain.

It is found in the cytoplasm. In Bacillus subtilis (strain 168), this protein is Cold shock protein CspD (cspD).